We begin with the raw amino-acid sequence, 205 residues long: Large ribosomal subunit protein uL3 (205 aa).

The protein belongs to the universal ribosomal protein uL3 family. As to quaternary structure, part of the 50S ribosomal subunit. Forms a cluster with proteins L14 and L19.

Functionally, one of the primary rRNA binding proteins, it binds directly near the 3'-end of the 23S rRNA, where it nucleates assembly of the 50S subunit. The chain is Large ribosomal subunit protein uL3 from Parabacteroides distasonis (strain ATCC 8503 / DSM 20701 / CIP 104284 / JCM 5825 / NCTC 11152).